The chain runs to 842 residues: Elongation factor 2 (842 aa).

Positions 17–253 constitute a tr-type G domain; that stretch reads TNVRNMSVIA…LWGDSYFNPK (237 aa). Residues 26 to 33, 158 to 161, and 213 to 215 each bind GTP; these read AHVDHGKS, NKVD, and SGL. Residue His-699 is modified to Diphthamide.

It belongs to the TRAFAC class translation factor GTPase superfamily. Classic translation factor GTPase family. EF-G/EF-2 subfamily.

The protein resides in the cytoplasm. The enzyme catalyses GTP + H2O = GDP + phosphate + H(+). In terms of biological role, catalyzes the GTP-dependent ribosomal translocation step during translation elongation. During this step, the ribosome changes from the pre-translocational (PRE) to the post-translocational (POST) state as the newly formed A-site-bound peptidyl-tRNA and P-site-bound deacylated tRNA move to the P and E sites, respectively. Catalyzes the coordinated movement of the two tRNA molecules, the mRNA and conformational changes in the ribosome. The polypeptide is Elongation factor 2 (EFT1) (Debaryomyces hansenii (strain ATCC 36239 / CBS 767 / BCRC 21394 / JCM 1990 / NBRC 0083 / IGC 2968) (Yeast)).